Consider the following 439-residue polypeptide: Protease Do-like 1, chloroplastic (439 aa).

Residues 154-323 (QGSGSGFVWD…IPVDTVGGIV (170 aa)) form a serine protease region. Catalysis depends on charge relay system residues histidine 173, aspartate 203, and serine 282. Residues 326–423 (LVRFGKVTRP…EVTVEVLRGD (98 aa)) enclose the PDZ domain.

It belongs to the peptidase S1C family. As to quaternary structure, interacts with PTAC16 and other potential targets for degradation under high light conditions.

It localises to the plastid. The protein localises to the chloroplast thylakoid membrane. With respect to regulation, inhibited by phenylmethylsulfonyl fluoride and O-phenanthroline. Serine protease that is required at high temperature. May be involved in the degradation of damaged proteins. In vivo, can degrade beta-casein. In Arabidopsis thaliana (Mouse-ear cress), this protein is Protease Do-like 1, chloroplastic (DEGP1).